The following is a 569-amino-acid chain: Sialic acid-binding Ig-like lectin 5 (569 aa).

Residues 1-16 (MRWAWLLPLLWAGCLA) form the signal peptide. Topologically, residues 17–439 (TDGYSLSVTG…KSETSRGTVL (423 aa)) are extracellular. One can recognise an Ig-like V-type domain in the interval 18-116 (DGYSLSVTGS…DTGTYFFRLD (99 aa)). 4 disulfide bridges follow: cysteine 35-cysteine 163, cysteine 40-cysteine 96, cysteine 157-cysteine 206, and cysteine 265-cysteine 308. Asparagine 95 carries an N-linked (GlcNAc...) asparagine glycan. Residues arginine 114, lysine 120, and serine 122 each contribute to the N-acetylneuraminate site. 2 Ig-like C2-type domains span residues 139 to 224 (PNIQ…QQLS) and 229 to 324 (PQKM…VSLS). Asparagine 151, asparagine 200, and asparagine 203 each carry an N-linked (GlcNAc...) asparagine glycan. N-linked (GlcNAc...) asparagine glycosylation is found at asparagine 369, asparagine 372, and asparagine 387. Residues 440-460 (GAIWGAGLMALLAVCLCLIFF) form a helical membrane-spanning segment. The Cytoplasmic segment spans residues 461–569 (TVKVLRKKSA…VYTEIKIHKC (109 aa)). The segment at 508 to 556 (HLNEPGSQTQKEQPPLATVPDTQKDEPELHYASLSFQGPMPPKPQNTEA) is disordered. The ITIM motif signature appears at 536-541 (LHYASL). The SLAM-like motif signature appears at 559–564 (SVYTEI).

It belongs to the immunoglobulin superfamily. SIGLEC (sialic acid binding Ig-like lectin) family. As to expression, predominantly expressed by immature monocytic/myeloid lineage cells in bone marrow. Also found at lower levels in mature neutrophils and monocytes.

It is found in the membrane. Putative adhesion molecule that mediates sialic-acid dependent binding to cells. Preferentially binds to alpha-2,3-linked sialic acid. The sialic acid recognition site may be masked by cis interactions with sialic acids on the same cell surface. The polypeptide is Sialic acid-binding Ig-like lectin 5 (Siglec5) (Mus musculus (Mouse)).